The chain runs to 185 residues: MNWHMIISGLIVVVLKIVGMTFFLLYFPQIFGEHNVSFSPTERPGTVPQIFGSSNVSFTPTESFGTVCPTGWDFHQGRCFFLSTSENSWNNSMNFCKQKGSTLAIVNTPEKLKFLQNISGAEKYFIGLLYQPAEKMWRWINNSVFNGSVISHSHNFNCVTIGLTKTFDAASCDVNYRSICEKSAQ.

Residues methionine 1–histidine 4 are Cytoplasmic-facing. The helical; Signal-anchor for type II membrane protein transmembrane segment at methionine 5–phenylalanine 27 threads the bilayer. Residues proline 28 to glutamine 185 are Extracellular-facing. Asparagine 35 and asparagine 55 each carry an N-linked (GlcNAc...) asparagine glycan. Cysteine 68 and cysteine 79 are oxidised to a cystine. The 107-residue stretch at histidine 75–glutamate 181 folds into the C-type lectin domain. 4 N-linked (GlcNAc...) asparagine glycosylation sites follow: asparagine 90, asparagine 117, asparagine 141, and asparagine 146. 2 cysteine pairs are disulfide-bonded: cysteine 96/cysteine 180 and cysteine 158/cysteine 172.

In terms of assembly, monomer. Homodimer. The majority of CLEC5A is expressed as a monomeric form on macrophages. Interacts with TYROBP/DAP12. The interaction with TYROBP is required for CLEC5 cell surface expression. Interacts with HCST/DAP10. Forms a CLEC5A/TYROBP/HCST trimolecular complex depending almost solely on TYROBP. N-glycosylated. Contains sialic acid residues. Constitutively expressed in monocytes and macrophages.

The protein localises to the cell membrane. Functionally, functions as a positive regulator of osteoclastogenesis. Cell surface receptor that signals via TYROBP. Regulates inflammatory responses. The chain is C-type lectin domain family 5 member A (CLEC5A) from Sus scrofa (Pig).